The sequence spans 310 residues: Protein BIG GRAIN 1 (310 aa).

Residues arginine 81–isoleucine 141 are disordered. The span at serine 90–alanine 106 shows a compositional bias: low complexity.

Belongs to the BIG GRAIN 1 (BG1) plant protein family.

The protein localises to the cell membrane. Involved in auxin transport. Positive regulator of the auxin signaling pathway involved in gravitropism, plant growth and grain development. In Oryza sativa subsp. indica (Rice), this protein is Protein BIG GRAIN 1.